The chain runs to 113 residues: Putative single-stranded DNA-binding protein ycf41 (113 aa).

Positions 1–101 (MNYASFIIKI…EVSGFKIYPF (101 aa)) constitute an SSB domain.

It is found in the plastid. It localises to the chloroplast. This is Putative single-stranded DNA-binding protein ycf41 (ycf41) from Trieres chinensis (Marine centric diatom).